A 947-amino-acid polypeptide reads, in one-letter code: Bifunctional glutamine synthetase adenylyltransferase/adenylyl-removing enzyme (947 aa).

Residues 1-440 are adenylyl removase; sequence MTPLSSPLSQ…VFNELIGDDE (440 aa). The tract at residues 450–947 is adenylyl transferase; it reads SEPWREVWQD…ASWRKWLVAV (498 aa).

Belongs to the GlnE family. It depends on Mg(2+) as a cofactor.

It carries out the reaction [glutamine synthetase]-O(4)-(5'-adenylyl)-L-tyrosine + phosphate = [glutamine synthetase]-L-tyrosine + ADP. The enzyme catalyses [glutamine synthetase]-L-tyrosine + ATP = [glutamine synthetase]-O(4)-(5'-adenylyl)-L-tyrosine + diphosphate. Its function is as follows. Involved in the regulation of glutamine synthetase GlnA, a key enzyme in the process to assimilate ammonia. When cellular nitrogen levels are high, the C-terminal adenylyl transferase (AT) inactivates GlnA by covalent transfer of an adenylyl group from ATP to specific tyrosine residue of GlnA, thus reducing its activity. Conversely, when nitrogen levels are low, the N-terminal adenylyl removase (AR) activates GlnA by removing the adenylyl group by phosphorolysis, increasing its activity. The regulatory region of GlnE binds the signal transduction protein PII (GlnB) which indicates the nitrogen status of the cell. In Salmonella paratyphi C (strain RKS4594), this protein is Bifunctional glutamine synthetase adenylyltransferase/adenylyl-removing enzyme.